The following is a 214-amino-acid chain: Large ribosomal subunit protein uL3 (214 aa).

A compositionally biased stretch (polar residues) spans Ser132–Ala145. The disordered stretch occupies residues Ser132–Pro155. At Gln153 the chain carries N5-methylglutamine.

The protein belongs to the universal ribosomal protein uL3 family. In terms of assembly, part of the 50S ribosomal subunit. Forms a cluster with proteins L14 and L19. Post-translationally, methylated by PrmB.

Its function is as follows. One of the primary rRNA binding proteins, it binds directly near the 3'-end of the 23S rRNA, where it nucleates assembly of the 50S subunit. The chain is Large ribosomal subunit protein uL3 from Laribacter hongkongensis (strain HLHK9).